A 394-amino-acid chain; its full sequence is Small ribosomal subunit protein mS79 (rPPR3b) (394 aa).

A mitochondrion-targeting transit peptide spans 1–24 (MSSLSRFLLRGNFSFSTHTNRRFF). 8 PPR repeats span residues 105–139 (KEGF…NCKR), 140–170 (TALS…LPGK), 176–210 (DVAS…GLKP), 211–245 (DHIT…NVKR), 246–280 (DIRS…ELKP), 281–315 (DVFT…GCRP), 316–350 (LKFV…RLLV), and 351–385 (DEAV…DYLQ).

Belongs to the PPR family. P subfamily. As to quaternary structure, component of the mitochondrial ribosome small subunit.

Its subcellular location is the mitochondrion. This Arabidopsis thaliana (Mouse-ear cress) protein is Small ribosomal subunit protein mS79 (rPPR3b).